The primary structure comprises 470 residues: UTP--glucose-1-phosphate uridylyltransferase 1 (470 aa).

An N-acetylalanine modification is found at alanine 2. UTP is bound by residues 86-89 (LNGG), lysine 100, glutamine 163, and glycine 192. Substrate is bound at residue 88–89 (GG). Residues histidine 193 and 221 to 223 (NSD) each bind substrate. UTP is bound by residues aspartate 223 and lysine 361.

Belongs to the UDPGP type 1 family. In terms of tissue distribution, expressed in roots, rosette leaves, cauline leaves, stems, flowers and siliques.

It localises to the cytoplasm. The enzyme catalyses alpha-D-glucose 1-phosphate + UTP + H(+) = UDP-alpha-D-glucose + diphosphate. In terms of biological role, converts glucose 1-phosphate to UDP-glucose, which is the major glycosyl donor for polysaccharides. Acts redundantly with UGP2 and is essential for the synthesis of sucrose, starch and cell wall, and callose deposition. Involved in the regulation of the programmed cell death (PCD) induced by the fungal toxin fumonisin B1 (FB1). This is UTP--glucose-1-phosphate uridylyltransferase 1 from Arabidopsis thaliana (Mouse-ear cress).